We begin with the raw amino-acid sequence, 499 residues long: Putative antiporter subunit mnhD2 (499 aa).

The next 14 helical transmembrane spans lie at 3-23, 33-53, 79-99, 109-129, 131-151, 162-182, 210-230, 241-261, 272-292, 309-329, 331-351, 370-390, 404-424, and 452-472; these read LSNL…ILVF, YLYL…LIYV, LSLI…AYGF, YHLP…FLTS, LFNL…LITL, IIYV…IGLL, ISLI…FMWL, LAAL…IRFF, IHPL…IGVI, IGFI…GAIF, LVND…LVYI, FGVA…FSGF, GNYI…YSLF, and ILSI…VVLN.

It belongs to the CPA3 antiporters (TC 2.A.63) subunit D family. In terms of assembly, may form a heterooligomeric complex that consists of seven subunits: mnhA2, mnhB2, mnhC2, mnhD2, mnhE2, mnhF2 and mnhG2.

The protein localises to the cell membrane. In terms of biological role, expression of the mnh2 operon in E.coli is not able to catalyze Na(+)Li(+)/H(+) antiport. It does however confer higher growth rates than the control strain at up to pH 9.5. The operon may encode an NADH-ubiquinone oxidoreductase. The polypeptide is Putative antiporter subunit mnhD2 (mnhD2) (Staphylococcus aureus).